The following is a 368-amino-acid chain: Phospho-N-acetylmuramoyl-pentapeptide-transferase (368 aa).

The next 9 membrane-spanning stretches (helical) occupy residues 30 to 50 (AAAV…IKYL), 72 to 92 (LPTM…FLWA), 99 to 119 (VWLI…DDYM), 139 to 159 (VLLG…SVLL), 170 to 190 (LTID…TAVS), 201 to 221 (GLAS…AYLA), 238 to 258 (GGEI…FLWF), 264 to 286 (EIIM…ALLI), and 345 to 365 (KIVI…LMTL).

Belongs to the glycosyltransferase 4 family. MraY subfamily. Mg(2+) is required as a cofactor.

The protein resides in the cell inner membrane. It catalyses the reaction UDP-N-acetyl-alpha-D-muramoyl-L-alanyl-gamma-D-glutamyl-meso-2,6-diaminopimeloyl-D-alanyl-D-alanine + di-trans,octa-cis-undecaprenyl phosphate = di-trans,octa-cis-undecaprenyl diphospho-N-acetyl-alpha-D-muramoyl-L-alanyl-D-glutamyl-meso-2,6-diaminopimeloyl-D-alanyl-D-alanine + UMP. Its pathway is cell wall biogenesis; peptidoglycan biosynthesis. In terms of biological role, catalyzes the initial step of the lipid cycle reactions in the biosynthesis of the cell wall peptidoglycan: transfers peptidoglycan precursor phospho-MurNAc-pentapeptide from UDP-MurNAc-pentapeptide onto the lipid carrier undecaprenyl phosphate, yielding undecaprenyl-pyrophosphoryl-MurNAc-pentapeptide, known as lipid I. This chain is Phospho-N-acetylmuramoyl-pentapeptide-transferase, found in Chlorobium limicola (strain DSM 245 / NBRC 103803 / 6330).